Reading from the N-terminus, the 136-residue chain is DNA-directed RNA polymerase subunit omega (136 aa).

The protein belongs to the RNA polymerase subunit omega family. As to quaternary structure, the RNAP catalytic core consists of 2 alpha, 1 beta, 1 beta' and 1 omega subunit. When a sigma factor is associated with the core the holoenzyme is formed, which can initiate transcription.

The catalysed reaction is RNA(n) + a ribonucleoside 5'-triphosphate = RNA(n+1) + diphosphate. Its function is as follows. Promotes RNA polymerase assembly. Latches the N- and C-terminal regions of the beta' subunit thereby facilitating its interaction with the beta and alpha subunits. The sequence is that of DNA-directed RNA polymerase subunit omega from Acidiphilium cryptum (strain JF-5).